The sequence spans 288 residues: ATP synthase gamma chain (288 aa).

The protein belongs to the ATPase gamma chain family. In terms of assembly, F-type ATPases have 2 components, CF(1) - the catalytic core - and CF(0) - the membrane proton channel. CF(1) has five subunits: alpha(3), beta(3), gamma(1), delta(1), epsilon(1). CF(0) has three main subunits: a, b and c.

It is found in the cell membrane. Its function is as follows. Produces ATP from ADP in the presence of a proton gradient across the membrane. The gamma chain is believed to be important in regulating ATPase activity and the flow of protons through the CF(0) complex. This chain is ATP synthase gamma chain, found in Shouchella clausii (strain KSM-K16) (Alkalihalobacillus clausii).